The sequence spans 157 residues: 6,7-dimethyl-8-ribityllumazine synthase (157 aa).

Residues Phe-22, 57 to 59 (AYE), and 81 to 83 (TVI) contribute to the 5-amino-6-(D-ribitylamino)uracil site. 86 to 87 (GT) lines the (2S)-2-hydroxy-3-oxobutyl phosphate pocket. His-89 functions as the Proton donor in the catalytic mechanism. A 5-amino-6-(D-ribitylamino)uracil-binding site is contributed by Phe-114. Arg-128 is a binding site for (2S)-2-hydroxy-3-oxobutyl phosphate.

It belongs to the DMRL synthase family. As to quaternary structure, forms an icosahedral capsid composed of 60 subunits, arranged as a dodecamer of pentamers.

The catalysed reaction is (2S)-2-hydroxy-3-oxobutyl phosphate + 5-amino-6-(D-ribitylamino)uracil = 6,7-dimethyl-8-(1-D-ribityl)lumazine + phosphate + 2 H2O + H(+). It functions in the pathway cofactor biosynthesis; riboflavin biosynthesis; riboflavin from 2-hydroxy-3-oxobutyl phosphate and 5-amino-6-(D-ribitylamino)uracil: step 1/2. In terms of biological role, catalyzes the formation of 6,7-dimethyl-8-ribityllumazine by condensation of 5-amino-6-(D-ribitylamino)uracil with 3,4-dihydroxy-2-butanone 4-phosphate. This is the penultimate step in the biosynthesis of riboflavin. This is 6,7-dimethyl-8-ribityllumazine synthase from Pasteurella multocida (strain Pm70).